The following is a 554-amino-acid chain: Carboxypeptidase Y homolog A (554 aa).

The N-terminal stretch at 1–17 is a signal peptide; that stretch reads MRIAASTVLFGAASAAS. Positions 18–137 are excised as a propeptide; sequence FQQQAQHVLS…RLEEYNLRVK (120 aa). Cystine bridges form between cysteine 191-cysteine 431, cysteine 325-cysteine 339, cysteine 349-cysteine 372, cysteine 356-cysteine 365, and cysteine 394-cysteine 401. Residue asparagine 222 is glycosylated (N-linked (GlcNAc...) asparagine). Residue serine 278 is part of the active site. Residue aspartate 470 is part of the active site. N-linked (GlcNAc...) asparagine glycosylation is present at asparagine 518. The active site involves histidine 529.

This sequence belongs to the peptidase S10 family.

Its subcellular location is the vacuole. The catalysed reaction is Release of a C-terminal amino acid with broad specificity.. In terms of biological role, vacuolar carboxypeptidase involved in degradation of small peptides. Digests preferentially peptides containing an aliphatic or hydrophobic residue in P1' position, as well as methionine, leucine or phenylalanine in P1 position of ester substrate. This is Carboxypeptidase Y homolog A (CPYA) from Chaetomium globosum (strain ATCC 6205 / CBS 148.51 / DSM 1962 / NBRC 6347 / NRRL 1970) (Soil fungus).